The chain runs to 375 residues: Holliday junction branch migration complex subunit RuvB (375 aa).

Residues 1-22 (MAIVSSKQSPQPDGSKKPSQAK) show a composition bias toward polar residues. The segment at 1 to 44 (MAIVSSKQSPQPDGSKKPSQAKSVKKSVEHSKPQQTDALLQPEA) is disordered. Positions 13-218 (DGSKKPSQAK…FGFVQRLRFY (206 aa)) are large ATPase domain (RuvB-L). Residues Leu57, Arg58, Gly99, Lys102, Thr103, Thr104, 165-167 (EDF), Arg208, Tyr218, and Arg255 each bind ATP. A Mg(2+)-binding site is contributed by Thr103. The tract at residues 219–289 (EADELGQIVL…IAQEALELFN (71 aa)) is small ATPAse domain (RuvB-S). The segment at 292 to 375 (PCGLDWTDRR…PPDEQMRLLS (84 aa)) is head domain (RuvB-H). Arg347 and Arg352 together coordinate DNA.

The protein belongs to the RuvB family. Homohexamer. Forms an RuvA(8)-RuvB(12)-Holliday junction (HJ) complex. HJ DNA is sandwiched between 2 RuvA tetramers; dsDNA enters through RuvA and exits via RuvB. An RuvB hexamer assembles on each DNA strand where it exits the tetramer. Each RuvB hexamer is contacted by two RuvA subunits (via domain III) on 2 adjacent RuvB subunits; this complex drives branch migration. In the full resolvosome a probable DNA-RuvA(4)-RuvB(12)-RuvC(2) complex forms which resolves the HJ.

It is found in the cytoplasm. The enzyme catalyses ATP + H2O = ADP + phosphate + H(+). The RuvA-RuvB-RuvC complex processes Holliday junction (HJ) DNA during genetic recombination and DNA repair, while the RuvA-RuvB complex plays an important role in the rescue of blocked DNA replication forks via replication fork reversal (RFR). RuvA specifically binds to HJ cruciform DNA, conferring on it an open structure. The RuvB hexamer acts as an ATP-dependent pump, pulling dsDNA into and through the RuvAB complex. RuvB forms 2 homohexamers on either side of HJ DNA bound by 1 or 2 RuvA tetramers; 4 subunits per hexamer contact DNA at a time. Coordinated motions by a converter formed by DNA-disengaged RuvB subunits stimulates ATP hydrolysis and nucleotide exchange. Immobilization of the converter enables RuvB to convert the ATP-contained energy into a lever motion, pulling 2 nucleotides of DNA out of the RuvA tetramer per ATP hydrolyzed, thus driving DNA branch migration. The RuvB motors rotate together with the DNA substrate, which together with the progressing nucleotide cycle form the mechanistic basis for DNA recombination by continuous HJ branch migration. Branch migration allows RuvC to scan DNA until it finds its consensus sequence, where it cleaves and resolves cruciform DNA. This Acaryochloris marina (strain MBIC 11017) protein is Holliday junction branch migration complex subunit RuvB.